The chain runs to 191 residues: Peptidyl-tRNA hydrolase (191 aa).

Tyr-17 contacts tRNA. The Proton acceptor role is filled by His-22. The tRNA site is built by Tyr-68, Asn-70, and Asn-116.

It belongs to the PTH family. Monomer.

The protein resides in the cytoplasm. The catalysed reaction is an N-acyl-L-alpha-aminoacyl-tRNA + H2O = an N-acyl-L-amino acid + a tRNA + H(+). Hydrolyzes ribosome-free peptidyl-tRNAs (with 1 or more amino acids incorporated), which drop off the ribosome during protein synthesis, or as a result of ribosome stalling. Its function is as follows. Catalyzes the release of premature peptidyl moieties from peptidyl-tRNA molecules trapped in stalled 50S ribosomal subunits, and thus maintains levels of free tRNAs and 50S ribosomes. This Francisella tularensis subsp. tularensis (strain FSC 198) protein is Peptidyl-tRNA hydrolase.